A 432-amino-acid polypeptide reads, in one-letter code: Metacaspase-1 (432 aa).

Over residues 1–11 the composition is skewed to basic residues; that stretch reads MEVMDHHHHTS. 2 disordered regions span residues 1 to 21 and 41 to 87; these read MEVM…TTRR and PQPG…PNAP. A compositionally biased stretch (low complexity) spans 12 to 21; the sequence is STRPNPTTRR. A compositionally biased stretch (pro residues) spans 46-74; that stretch reads GAPPPQGGYGYPQPPPPQQPYGYSQPPPQ. Active-site residues include histidine 223 and cysteine 279.

Belongs to the peptidase C14B family.

In terms of biological role, involved in cell death (apoptosis). The polypeptide is Metacaspase-1 (casA) (Sclerotinia sclerotiorum (strain ATCC 18683 / 1980 / Ss-1) (White mold)).